The following is a 488-amino-acid chain: Katanin p60 ATPase-containing subunit A-like 1 (488 aa).

An N-acetylmethionine modification is found at methionine 1. The tract at residues 128–179 is disordered; that stretch reads GAGARGLVGRAHQISKSDKAASRDKDYRARGRDDKARKNMQDGASDGEIPKF. Positions 142 to 167 are enriched in basic and acidic residues; the sequence is SKSDKAASRDKDYRARGRDDKARKNM. Serine 172 bears the Phosphoserine mark. 246–253 is an ATP binding site; that stretch reads GPPGTGKT.

This sequence belongs to the AAA ATPase family. Katanin p60 subunit A1 subfamily. A-like 1 sub-subfamily. As to quaternary structure, interacts with KATNB1 and KATNBL1.

It localises to the cytoplasm. It is found in the cytoskeleton. Its subcellular location is the spindle pole. The protein resides in the spindle. The catalysed reaction is n ATP + n H2O + a microtubule = n ADP + n phosphate + (n+1) alpha/beta tubulin heterodimers.. In terms of biological role, regulates microtubule dynamics in Sertoli cells, a process that is essential for spermiogenesis and male fertility. Severs microtubules in an ATP-dependent manner, promoting rapid reorganization of cellular microtubule arrays. Has microtubule-severing activity in vitro. In Rattus norvegicus (Rat), this protein is Katanin p60 ATPase-containing subunit A-like 1 (Katnal1).